A 45-amino-acid polypeptide reads, in one-letter code: Gene 78 protein (45 aa).

The segment covering 1–14 (MKKMSDQLKARLEL) has biased composition (basic and acidic residues). The interval 1–45 (MKKMSDQLKARLELRLSNAAQPHRNRKREMKRPGKGNRNNWKKEY) is disordered. A compositionally biased stretch (basic residues) spans 23-35 (HRNRKREMKRPGK).

The sequence is that of Gene 78 protein (78) from Mycobacterium phage L5 (Mycobacteriophage L5).